We begin with the raw amino-acid sequence, 437 residues long: Glutamyl-tRNA reductase (437 aa).

Substrate is bound by residues 46 to 49 (TCNR), S111, 116 to 118 (ERE), and Q122. The active-site Nucleophile is the C47. 192-197 (GTGAYA) is a binding site for NADP(+). The tract at residues 413–437 (PDVPEETAPSTRQDPSDTPRPRAVG) is disordered. The span at 426–437 (DPSDTPRPRAVG) shows a compositional bias: basic and acidic residues.

This sequence belongs to the glutamyl-tRNA reductase family. In terms of assembly, homodimer.

The catalysed reaction is (S)-4-amino-5-oxopentanoate + tRNA(Glu) + NADP(+) = L-glutamyl-tRNA(Glu) + NADPH + H(+). It participates in porphyrin-containing compound metabolism; protoporphyrin-IX biosynthesis; 5-aminolevulinate from L-glutamyl-tRNA(Glu): step 1/2. Functionally, catalyzes the NADPH-dependent reduction of glutamyl-tRNA(Glu) to glutamate 1-semialdehyde (GSA). This is Glutamyl-tRNA reductase from Kocuria rhizophila (strain ATCC 9341 / DSM 348 / NBRC 103217 / DC2201).